A 120-amino-acid chain; its full sequence is Ribonuclease P protein component (120 aa).

The protein belongs to the RnpA family. Consists of a catalytic RNA component (M1 or rnpB) and a protein subunit.

It carries out the reaction Endonucleolytic cleavage of RNA, removing 5'-extranucleotides from tRNA precursor.. RNaseP catalyzes the removal of the 5'-leader sequence from pre-tRNA to produce the mature 5'-terminus. It can also cleave other RNA substrates such as 4.5S RNA. The protein component plays an auxiliary but essential role in vivo by binding to the 5'-leader sequence and broadening the substrate specificity of the ribozyme. This Pseudoalteromonas atlantica (strain T6c / ATCC BAA-1087) protein is Ribonuclease P protein component.